The sequence spans 127 residues: MSYKPIAPAPSSTPGSSTPGPGTPVPTAGSVPSPSGSVPGAAAPFRPLFNDFGPPSMGYVQAMKPPGSQGSQSTYTDLLSVIEEMGKEIRPTYAGSKSAMERLKRGIIHARALVRECLAETERNART.

A disordered region spans residues 1-47 (MSYKPIAPAPSSTPGSSTPGPGTPVPTAGSVPSPSGSVPGAAAPFRP). Residues 9–44 (APSSTPGSSTPGPGTPVPTAGSVPSPSGSVPGAAAP) show a composition bias toward low complexity. The tract at residues 65–107 (PPGSQGSQSTYTDLLSVIEEMGKEIRPTYAGSKSAMERLKRGI) is interaction with CDK2.

Belongs to the CDK2AP family. As to quaternary structure, component of the nucleosome remodeling and deacetylase (NuRD) repressor complex, composed of core proteins MTA1, MTA2, MTA3, RBBP4, RBBP7, HDAC1, HDAC2, MBD2, MBD3, and peripherally associated proteins CDK2AP1, CDK2AP2, GATAD2A, GATAD2B, CHD3, CHD4 and CHD5. The exact stoichiometry of the NuRD complex is unknown, and some subunits such as MBD2 and MBD3, GATAD2A and GATAD2B, and CHD3, CHD4 and CHD5 define mutually exclusive NuRD complexes. Interacts with CDK2AP1. Interacts with CDK2. Interacts with MAPK1. Post-translationally, phosphorylated by MAPK1 and CDK2. As to expression, oocytes (at protein level).

The protein resides in the cytoplasm. It localises to the nucleus. Functionally, acts as a component of the histone deacetylase NuRD complex which participates in the remodeling of chromatin. Inhibits cell cycle G1/S phase transition by repressing CDK2 expression and activation; represses CDK2 activation by inhibiting its interaction with cyclin E and A. Plays a role in regulating the self-renewal of embryonic stem cells (ESCs) and in maintaining cell survival during terminal differentiation of ESCs. Regulates microtubule organization of metaphase II oocytes. The polypeptide is Cyclin-dependent kinase 2-associated protein 2 (Cdk2ap2) (Mus musculus (Mouse)).